A 514-amino-acid polypeptide reads, in one-letter code: Glutathione-binding protein GsiB (514 aa).

The signal sequence occupies residues 1-27; sequence MSVMTIQRRWLVAAGVTAAMVASPVWA.

This sequence belongs to the bacterial solute-binding protein 5 family. The complex is composed of two ATP-binding proteins (GsiA), two transmembrane proteins (GsiC and GsiD) and a solute-binding protein (GsiB).

It localises to the periplasm. Functionally, part of the ABC transporter complex GsiABCD involved in glutathione import. Binds glutathione. This Pectobacterium atrosepticum (strain SCRI 1043 / ATCC BAA-672) (Erwinia carotovora subsp. atroseptica) protein is Glutathione-binding protein GsiB.